The chain runs to 131 residues: Large ribosomal subunit protein bL19 (131 aa).

The protein belongs to the bacterial ribosomal protein bL19 family.

Its function is as follows. This protein is located at the 30S-50S ribosomal subunit interface and may play a role in the structure and function of the aminoacyl-tRNA binding site. The protein is Large ribosomal subunit protein bL19 of Anaeromyxobacter sp. (strain K).